Here is an 87-residue protein sequence, read N- to C-terminus: uncharacterized protein (87 aa).

This sequence to H.pylori HP0495/JHP0447.

This is an uncharacterized protein from Campylobacter jejuni subsp. jejuni serotype O:2 (strain ATCC 700819 / NCTC 11168).